The following is a 915-amino-acid chain: Protein MEI2-like 1 (915 aa).

Residues 1-90 (MPSDIMEQRG…NTTNGSQWES (90 aa)) are disordered. Basic and acidic residues predominate over residues 16-25 (HFHEDIHITS). Residues 50-65 (MPKSSWTSESYQLKPQ) are compositionally biased toward polar residues. The span at 66-77 (SSFSGSHPSGSP) shows a compositional bias: low complexity. A Phosphoserine modification is found at Ser76. Residues 78–89 (NARNTTNGSQWE) are compositionally biased toward polar residues. RRM domains lie at 217 to 290 (RTLL…YSIS) and 302 to 375 (GALL…PTYP). Disordered stretches follow at residues 690–723 (PGRS…SSSN) and 854–915 (LFHT…LKEN). The segment covering 705–723 (PNERYRNLSHRRSESSSSN) has biased composition (basic and acidic residues). Over residues 882 to 898 (RSSSIDNYNSFSISSVS) the composition is skewed to polar residues.

In terms of tissue distribution, expressed in roots, shoots, leaves, flowers and siliques.

Its function is as follows. Probable RNA-binding transcriptional activator that plays a role in meiosis and vegetative growth. May be a downstream effector of TOR signaling pathway and recruited by RAPTOR1 for TOR substrate. The sequence is that of Protein MEI2-like 1 (ML1) from Arabidopsis thaliana (Mouse-ear cress).